Here is a 171-residue protein sequence, read N- to C-terminus: Putative defense protein (171 aa).

Residues 1 to 23 (MKVYACLCAAVVMLVMTSRVSEA) form the signal peptide. Residues 24–171 (RSTGAPLSAC…VQSAPIKIVS (148 aa)) form the Reelin domain. Residues Cys-33 and Cys-110 are joined by a disulfide bond. The N-linked (GlcNAc...) asparagine glycan is linked to Asn-41.

The protein belongs to the insect defense protein family.

It localises to the secreted. May have antimicrobial activity. In Bombyx mori (Silk moth), this protein is Putative defense protein.